A 233-amino-acid chain; its full sequence is Chalcone--flavanone isomerase (233 aa).

3 residues coordinate substrate: Thr-47, Asn-113, and Ser-192.

The protein belongs to the chalcone isomerase family.

The enzyme catalyses a chalcone = a flavanone.. The protein operates within secondary metabolite biosynthesis; flavonoid biosynthesis. Functionally, catalyzes the intramolecular cyclization of bicyclic chalcones into tricyclic (S)-flavanones. Responsible for the isomerization of 4,2',4',6'-tetrahydroxychalcone (also termed chalcone) into naringenin. This chain is Chalcone--flavanone isomerase (CHI), found in Oryza sativa subsp. japonica (Rice).